The sequence spans 198 residues: Protein GrpE (198 aa).

The protein belongs to the GrpE family. Homodimer.

It is found in the cytoplasm. In terms of biological role, participates actively in the response to hyperosmotic and heat shock by preventing the aggregation of stress-denatured proteins, in association with DnaK and GrpE. It is the nucleotide exchange factor for DnaK and may function as a thermosensor. Unfolded proteins bind initially to DnaJ; upon interaction with the DnaJ-bound protein, DnaK hydrolyzes its bound ATP, resulting in the formation of a stable complex. GrpE releases ADP from DnaK; ATP binding to DnaK triggers the release of the substrate protein, thus completing the reaction cycle. Several rounds of ATP-dependent interactions between DnaJ, DnaK and GrpE are required for fully efficient folding. This chain is Protein GrpE, found in Actinobacillus pleuropneumoniae serotype 5b (strain L20).